The following is a 125-amino-acid chain: MAVSKEDILETISNMTVLEIVDLISAMEEKFGVSAAAAVAAAPVAAAGGEAAAEVKDEFDVVMTSFGANKVGVIKVIRAITGLGLKEAKDMVEGAPSTVKEGANKDEAEKIKKELEEAGASVELK.

It belongs to the bacterial ribosomal protein bL12 family. As to quaternary structure, homodimer. Part of the ribosomal stalk of the 50S ribosomal subunit. Forms a multimeric L10(L12)X complex, where L10 forms an elongated spine to which 2 to 4 L12 dimers bind in a sequential fashion. Binds GTP-bound translation factors.

Forms part of the ribosomal stalk which helps the ribosome interact with GTP-bound translation factors. Is thus essential for accurate translation. The sequence is that of Large ribosomal subunit protein bL12 from Thioalkalivibrio sulfidiphilus (strain HL-EbGR7).